The following is a 341-amino-acid chain: Glycerol-1-phosphate dehydrogenase [NAD(P)+] (341 aa).

Residues 81-85 (GKAID) and 103-106 (TTAS) each bind NAD(+). Residue aspartate 108 coordinates substrate. Serine 112 provides a ligand contact to NAD(+). A substrate-binding site is contributed by aspartate 151. The Zn(2+) site is built by aspartate 151 and histidine 232. Histidine 236 contributes to the substrate binding site. A Zn(2+)-binding site is contributed by histidine 253.

The protein belongs to the glycerol-1-phosphate dehydrogenase family. Zn(2+) is required as a cofactor.

The protein resides in the cytoplasm. It carries out the reaction sn-glycerol 1-phosphate + NAD(+) = dihydroxyacetone phosphate + NADH + H(+). It catalyses the reaction sn-glycerol 1-phosphate + NADP(+) = dihydroxyacetone phosphate + NADPH + H(+). Its pathway is membrane lipid metabolism; glycerophospholipid metabolism. Functionally, catalyzes the NAD(P)H-dependent reduction of dihydroxyacetonephosphate (DHAP or glycerone phosphate) to glycerol 1-phosphate (G1P). The G1P thus generated is used as the glycerophosphate backbone of phospholipids in the cellular membranes of Archaea. This is Glycerol-1-phosphate dehydrogenase [NAD(P)+] from Methanococcus aeolicus (strain ATCC BAA-1280 / DSM 17508 / OCM 812 / Nankai-3).